The primary structure comprises 1022 residues: Translation initiation factor IF-2 (1022 aa).

Over residues 82 to 94 the composition is skewed to basic and acidic residues; that stretch reads EQSRKTLEKEQHL. Disordered stretches follow at residues 82 to 129 and 342 to 436; these read EQSR…AVPA and SENK…QREL. Residues 104–115 are compositionally biased toward low complexity; the sequence is ASKSSAKGSESA. Residues 375 to 384 show a composition bias toward basic residues; that stretch reads KAKKGKKKKK. Residues 421-436 are compositionally biased toward basic and acidic residues; it reads SEREREQEEGAAQREL. The tr-type G domain occupies 519–689; sequence TRPPVVTIMG…LTEAELRELK (171 aa). Residues 528–535 are G1; sequence GHVDHGKT. 528–535 is a binding site for GTP; sequence GHVDHGKT. Residues 553–557 form a G2 region; it reads GITQH. Residues 575–578 are G3; the sequence is DTPG. Residues 575-579 and 629-632 contribute to the GTP site; these read DTPGH and NKID. Positions 629–632 are G4; sequence NKID. Residues 665–667 are G5; that stretch reads SAK.

This sequence belongs to the TRAFAC class translation factor GTPase superfamily. Classic translation factor GTPase family. IF-2 subfamily.

It is found in the cytoplasm. In terms of biological role, one of the essential components for the initiation of protein synthesis. Protects formylmethionyl-tRNA from spontaneous hydrolysis and promotes its binding to the 30S ribosomal subunits. Also involved in the hydrolysis of GTP during the formation of the 70S ribosomal complex. This Chlorobium chlorochromatii (strain CaD3) protein is Translation initiation factor IF-2.